A 336-amino-acid chain; its full sequence is Phosphatidylglycerol--prolipoprotein diacylglyceryl transferase (336 aa).

3 helical membrane-spanning segments follow: residues isoleucine 16 to valine 36, isoleucine 53 to isoleucine 73, and isoleucine 93 to alanine 113. Arginine 141 provides a ligand contact to a 1,2-diacyl-sn-glycero-3-phospho-(1'-sn-glycerol). 3 helical membrane-spanning segments follow: residues proline 190–glycine 210, glycine 220–leucine 240, and isoleucine 253–glutamine 273.

The protein belongs to the Lgt family.

The protein localises to the cell membrane. The enzyme catalyses L-cysteinyl-[prolipoprotein] + a 1,2-diacyl-sn-glycero-3-phospho-(1'-sn-glycerol) = an S-1,2-diacyl-sn-glyceryl-L-cysteinyl-[prolipoprotein] + sn-glycerol 1-phosphate + H(+). The protein operates within protein modification; lipoprotein biosynthesis (diacylglyceryl transfer). Its function is as follows. Catalyzes the transfer of the diacylglyceryl group from phosphatidylglycerol to the sulfhydryl group of the N-terminal cysteine of a prolipoprotein, the first step in the formation of mature lipoproteins. The chain is Phosphatidylglycerol--prolipoprotein diacylglyceryl transferase from Bifidobacterium adolescentis (strain ATCC 15703 / DSM 20083 / NCTC 11814 / E194a).